The chain runs to 313 residues: Porphobilinogen deaminase (313 aa).

An S-(dipyrrolylmethanemethyl)cysteine modification is found at C242.

It belongs to the HMBS family. Monomer. Dipyrromethane is required as a cofactor.

The enzyme catalyses 4 porphobilinogen + H2O = hydroxymethylbilane + 4 NH4(+). The protein operates within porphyrin-containing compound metabolism; protoporphyrin-IX biosynthesis; coproporphyrinogen-III from 5-aminolevulinate: step 2/4. Tetrapolymerization of the monopyrrole PBG into the hydroxymethylbilane pre-uroporphyrinogen in several discrete steps. The chain is Porphobilinogen deaminase from Pseudomonas putida (strain ATCC 700007 / DSM 6899 / JCM 31910 / BCRC 17059 / LMG 24140 / F1).